A 27-amino-acid polypeptide reads, in one-letter code: Protein YqfI (27 aa).

The protein is Protein YqfI of Escherichia coli (strain K12).